The sequence spans 429 residues: Phosphoribosylamine--glycine ligase (429 aa).

An ATP-grasp domain is found at 109-316 (KDFLARHQIP…LVDLCLAAID (208 aa)). Residue 135-196 (VREQGAPIVV…EEFLDGEEAS (62 aa)) participates in ATP binding. Residues 212–235 (SQDHKRVGDKDTGPNTGGMGAYSP) are disordered. Positions 213-223 (QDHKRVGDKDT) are enriched in basic and acidic residues. 2 residues coordinate Mg(2+): Glu286 and Asn288.

It belongs to the GARS family. It depends on Mg(2+) as a cofactor. Mn(2+) serves as cofactor.

The enzyme catalyses 5-phospho-beta-D-ribosylamine + glycine + ATP = N(1)-(5-phospho-beta-D-ribosyl)glycinamide + ADP + phosphate + H(+). Its pathway is purine metabolism; IMP biosynthesis via de novo pathway; N(1)-(5-phospho-D-ribosyl)glycinamide from 5-phospho-alpha-D-ribose 1-diphosphate: step 2/2. This Vibrio parahaemolyticus serotype O3:K6 (strain RIMD 2210633) protein is Phosphoribosylamine--glycine ligase.